Reading from the N-terminus, the 261-residue chain is Putative hydro-lyase SH0274 (261 aa).

The protein belongs to the D-glutamate cyclase family.

The polypeptide is Putative hydro-lyase SH0274 (Staphylococcus haemolyticus (strain JCSC1435)).